A 367-amino-acid polypeptide reads, in one-letter code: Putative transport protein MT0215 (367 aa).

9 helical membrane passes run alanine 18 to leucine 38, phenylalanine 41 to proline 61, valine 74 to valine 94, isoleucine 161 to glycine 181, alanine 228 to leucine 248, valine 249 to valine 269, valine 270 to valine 290, valine 314 to valine 334, and valine 337 to alanine 357.

It belongs to the autoinducer-2 exporter (AI-2E) (TC 2.A.86) family.

Its subcellular location is the cell membrane. This is Putative transport protein MT0215 from Mycobacterium tuberculosis (strain CDC 1551 / Oshkosh).